A 104-amino-acid chain; its full sequence is uncharacterized protein (104 aa).

This is an uncharacterized protein from Mycobacterium tuberculosis (strain CDC 1551 / Oshkosh).